A 494-amino-acid polypeptide reads, in one-letter code: MANYFNTLNLRQQLEQLGKCRFMNRDEFASECDFLKGKKVVIVGCGAQGLNQGLNMRDSGLDVSYALRAEAIAEKRKSFKQASENGFTVGTYEDLIPTADLVVNLTPDKQHTSVVKAVMPLMKDGAALGYSHGFNIVEEGTQIRKDITVVMVAPKCPGTEVREEYKRGFGVPTLIAVHPENDPKGDGLAIAKAWAAATGGHRAGVLQSSFVAEVKSDLMGEQTILCGMLQAGSILCYEKMIADGIDAGYAGKLIQFGWETITEALKQGGITAMMDRLSNPAKLRAFELAEEMRVLMRPLFRKHQDDIISGAFSSGMMADWANNDADLFRWREETGASAFENAPAFDGAIAEQEYFDNGILMVAMVKAGVELAFETMTESGIIAESAYYESLHELPLIANTIARKRLYEMNVVISDTAEYGNYLFANAAVPLLKAHIMPKVGTDVIGKTLSVKDNGVDNVTLVQVNEIIRNHPIEQVGKVLRGYMKDMKRIAVGG.

A KARI N-terminal Rossmann domain is found at 14 to 208 (LEQLGKCRFM…GGHRAGVLQS (195 aa)). Residues 45 to 48 (CGAQ), arginine 68, arginine 76, serine 78, and 108 to 110 (DKQ) contribute to the NADP(+) site. The active site involves histidine 132. Residue glycine 158 coordinates NADP(+). 2 KARI C-terminal knotted domains span residues 209-344 (SFVA…NAPA) and 345-487 (FDGA…MKDM). Aspartate 217, glutamate 221, glutamate 389, and glutamate 393 together coordinate Mg(2+). Position 414 (serine 414) interacts with substrate.

Belongs to the ketol-acid reductoisomerase family. Mg(2+) serves as cofactor.

It carries out the reaction (2R)-2,3-dihydroxy-3-methylbutanoate + NADP(+) = (2S)-2-acetolactate + NADPH + H(+). It catalyses the reaction (2R,3R)-2,3-dihydroxy-3-methylpentanoate + NADP(+) = (S)-2-ethyl-2-hydroxy-3-oxobutanoate + NADPH + H(+). It functions in the pathway amino-acid biosynthesis; L-isoleucine biosynthesis; L-isoleucine from 2-oxobutanoate: step 2/4. The protein operates within amino-acid biosynthesis; L-valine biosynthesis; L-valine from pyruvate: step 2/4. Involved in the biosynthesis of branched-chain amino acids (BCAA). Catalyzes an alkyl-migration followed by a ketol-acid reduction of (S)-2-acetolactate (S2AL) to yield (R)-2,3-dihydroxy-isovalerate. In the isomerase reaction, S2AL is rearranged via a Mg-dependent methyl migration to produce 3-hydroxy-3-methyl-2-ketobutyrate (HMKB). In the reductase reaction, this 2-ketoacid undergoes a metal-dependent reduction by NADPH to yield (R)-2,3-dihydroxy-isovalerate. The chain is Ketol-acid reductoisomerase (NADP(+)) from Tolumonas auensis (strain DSM 9187 / NBRC 110442 / TA 4).